The primary structure comprises 1805 residues: Cytadherence high molecular weight protein 2 (1805 aa).

Coiled-coil stretches lie at residues 28-838 (EKNR…NNAF), 914-1591 (ELKI…LRTQ), 1632-1723 (DNTL…QHNT), and 1777-1804 (NITK…KAAS).

Component of the cytoskeleton-like structure which stabilizes the shape of the wall-less Mycoplasma. This cytoskeleton-like network of accessory proteins containing HMW proteins 1 to 5 allows the proper anchoring of cytadhesin proteins in the mycoplasmal membrane at the attachment organelle. The polypeptide is Cytadherence high molecular weight protein 2 (hmw2) (Mycoplasma genitalium (strain ATCC 33530 / DSM 19775 / NCTC 10195 / G37) (Mycoplasmoides genitalium)).